The following is a 284-amino-acid chain: 2-dehydro-3-deoxyphosphooctonate aldolase (284 aa).

Belongs to the KdsA family.

It is found in the cytoplasm. It catalyses the reaction D-arabinose 5-phosphate + phosphoenolpyruvate + H2O = 3-deoxy-alpha-D-manno-2-octulosonate-8-phosphate + phosphate. Its pathway is carbohydrate biosynthesis; 3-deoxy-D-manno-octulosonate biosynthesis; 3-deoxy-D-manno-octulosonate from D-ribulose 5-phosphate: step 2/3. The protein operates within bacterial outer membrane biogenesis; lipopolysaccharide biosynthesis. The chain is 2-dehydro-3-deoxyphosphooctonate aldolase from Vibrio atlanticus (strain LGP32) (Vibrio splendidus (strain Mel32)).